The following is a 74-amino-acid chain: ATP synthase subunit 9, mitochondrial (74 aa).

Transmembrane regions (helical) follow at residues 8 to 28 (IGAG…GNVF) and 45 to 72 (LFGY…LILF).

It belongs to the ATPase C chain family. As to quaternary structure, F-type ATPases have 2 components, CF(1) - the catalytic core - and CF(0) - the membrane proton channel. CF(1) has five subunits: alpha(3), beta(3), gamma(1), delta(1), epsilon(1). CF(0) has three main subunits: a, b and c.

Its subcellular location is the mitochondrion membrane. In terms of biological role, this protein is one of the chains of the nonenzymatic membrane component (F0) of mitochondrial ATPase. The sequence is that of ATP synthase subunit 9, mitochondrial (ATP9) from Pisum sativum (Garden pea).